A 156-amino-acid polypeptide reads, in one-letter code: Lipoprotein signal peptidase (156 aa).

A helical transmembrane segment spans residues 62 to 82 (GNTVFMVLSAVIIAILSYTKI). Catalysis depends on residues aspartate 115 and aspartate 133. Residues 126–146 (WPAFNLADLTITCGVIVFLAM) traverse the membrane as a helical segment.

It belongs to the peptidase A8 family.

It is found in the cell inner membrane. The catalysed reaction is Release of signal peptides from bacterial membrane prolipoproteins. Hydrolyzes -Xaa-Yaa-Zaa-|-(S,diacylglyceryl)Cys-, in which Xaa is hydrophobic (preferably Leu), and Yaa (Ala or Ser) and Zaa (Gly or Ala) have small, neutral side chains.. It participates in protein modification; lipoprotein biosynthesis (signal peptide cleavage). Its function is as follows. This protein specifically catalyzes the removal of signal peptides from prolipoproteins. The polypeptide is Lipoprotein signal peptidase (Anaplasma phagocytophilum (strain HZ)).